Consider the following 1470-residue polypeptide: Niemann-Pick type C1-related protein (1470 aa).

Over 1–3 (MFV) the chain is Cytoplasmic. Residues 4–34 (KNFIHKLKELKQKSLDKFANLLYDYGGYVYD) lie within the membrane without spanning it. R35 is a topological domain (cytoplasmic). Residues 36-56 (PCTFIICSLICCLLLTCGFYF) form a helical membrane-spanning segment. Topologically, residues 57–493 (KEHEKDIYKL…DEVDRISKID (437 aa)) are extracellular. 4 N-linked (GlcNAc...) asparagine glycosylation sites follow: N78, N165, N294, and N361. Residues 494-514 (NLTRLLLLIGVLLIFMYALFN) traverse the membrane as a helical segment. The 160-residue stretch at 494–653 (NLTRLLLLIG…LTFLLSFLCI (160 aa)) folds into the SSD domain. Over 515 to 524 (NVTSVLYRSK) the chain is Cytoplasmic. The chain crosses the membrane as a helical span at residues 525–549 (PLCAVMGIFCGFLGFLSGSGFLYFL). The Extracellular portion of the chain corresponds to 550–554 (GVKSV). A helical transmembrane segment spans residues 555-582 (PPAETVPFLVIGVGVDDVFVILNSYSLL). Over 583–587 (FMVKD) the chain is Cytoplasmic. A helical membrane pass occupies residues 588–619 (NKKRIQMCLKDSALAITVTTLTNIIAFLISAI). The Extracellular segment spans residues 620-622 (SPF). The chain crosses the membrane as a helical span at residues 623–659 (YSICAFSLFTASSLFFGYLMVLTFLLSFLCIEAKLEK). Topologically, residues 660 to 663 (KKRN) are cytoplasmic. The stretch at 664–673 (IFTGTFHLFR) is an intramembrane region. Topologically, residues 674-1057 (SIFMKSSKKN…IYEEPKGNIG (384 aa)) are cytoplasmic. Residues 1058-1073 (KYFRSLVKNYYVPFLS) lie within the membrane without spanning it. Position 1074 (S1074) is a topological domain, cytoplasmic. The chain crosses the membrane as a helical span at residues 1075-1098 (RFGKTIVYIMFTIIIAMSIYGCTL). Residues 1099–1300 (MKKGIKYDKA…NHNVQMVCFH (202 aa)) are Extracellular-facing. N-linked (GlcNAc...) asparagine glycosylation is present at N1218. A helical membrane pass occupies residues 1301–1334 (LSSIFNETDESIIEVTLINLGITILTILVVTAYI). Residues 1335 to 1337 (IKG) are Cytoplasmic-facing. A helical transmembrane segment spans residues 1338 to 1361 (FYSCVIIALIIFLIDLCIFGFMCL). At 1362–1367 (CGITMN) the chain is on the extracellular side. A helical membrane pass occupies residues 1368-1394 (IISMVILVLSVGFSIDHTSHIVQAFSH). Topologically, residues 1395–1399 (SMGRT) are cytoplasmic. Residues 1400–1431 (RDEKMKESLHLMIGPVLHSGLSTWFVISTLFF) traverse the membrane as a helical segment. Topologically, residues 1432–1434 (SNK) are extracellular. A helical transmembrane segment spans residues 1435 to 1466 (DFTVIFFQTLSLVLFFSITFSSMFLPVLLSSF). The Cytoplasmic portion of the chain corresponds to 1467 to 1470 (GPLH).

Belongs to the patched family.

It is found in the cell membrane. The catalysed reaction is cholesterol(in) = cholesterol(out). Its function is as follows. Facilitates cholesterol efflux from membranes in a pH-dependent manner. Required for maintaining normal parasite plasma membrane lipid composition. Required for the proper functioning of digestive vacuole. Required for the viability of blood-stage parasites. The polypeptide is Niemann-Pick type C1-related protein (Plasmodium falciparum (isolate 3D7)).